Reading from the N-terminus, the 517-residue chain is T-complex protein 11-like protein 2 (517 aa).

The disordered stretch occupies residues 1 to 59; it reads MPFNGEKQYVNEDQQSDSESSRFSESTASLSDYGCSRQSFTSDSSSKSSSPASTSPPRG. S16 is subject to Phosphoserine. Residues 17–55 show a composition bias toward low complexity; sequence DSESSRFSESTASLSDYGCSRQSFTSDSSSKSSSPASTS.

The protein belongs to the TCP11 family. As to quaternary structure, interacts with FMNL2; this interaction promotes muscle-derived satellite cell (MDSC) migration and differentiation.

Its subcellular location is the cytoplasm. It localises to the cytoskeleton. In terms of biological role, promotes the migration of muscle-derived satellite cells (MDSCs) during differentiation throught interaction with FMNL2 and therefore may participate in microfilament assembly. The protein is T-complex protein 11-like protein 2 of Rattus norvegicus (Rat).